The sequence spans 279 residues: Octanoyl-[GcvH]:protein N-octanoyltransferase (279 aa).

Residues 48–253 (ETSPPVIRLW…TLEKLSDEIV (206 aa)) enclose the BPL/LPL catalytic domain. C152 functions as the Acyl-thioester intermediate in the catalytic mechanism.

This sequence belongs to the octanoyltransferase LipL family.

It catalyses the reaction N(6)-octanoyl-L-lysyl-[glycine-cleavage complex H protein] + L-lysyl-[lipoyl-carrier protein] = N(6)-octanoyl-L-lysyl-[lipoyl-carrier protein] + L-lysyl-[glycine-cleavage complex H protein]. It participates in protein modification; protein lipoylation via endogenous pathway; protein N(6)-(lipoyl)lysine from octanoyl-[acyl-carrier-protein]. Its function is as follows. Catalyzes the amidotransfer (transamidation) of the octanoyl moiety from octanoyl-GcvH to the lipoyl domain of the E2 subunit of lipoate-dependent enzymes. This chain is Octanoyl-[GcvH]:protein N-octanoyltransferase, found in Oceanobacillus iheyensis (strain DSM 14371 / CIP 107618 / JCM 11309 / KCTC 3954 / HTE831).